We begin with the raw amino-acid sequence, 489 residues long: Ulvan Lyase-PL25 (489 aa).

Positions 1–31 are cleaved as a signal peptide; it reads MNLNKTLRKNSPSGYKALLTFSIICGLMATG. Residue Cys-32 is the site of N-palmitoyl cysteine attachment. The S-diacylglycerol cysteine moiety is linked to residue Cys-32. Positions 60 and 122 each coordinate substrate. Catalysis depends on His-123, which acts as the Proton donor. 2 residues coordinate substrate: Lys-125 and His-143. Tyr-188 serves as the catalytic Proton acceptor. Substrate contacts are provided by Arg-204, His-208, and Tyr-246. His-208 is a binding site for Zn(2+). The Zn(2+) site is built by His-264, Cys-266, and His-278. A substrate-binding site is contributed by His-278.

Belongs to the polysaccharide lyase 25 family.

The protein resides in the cell membrane. Functionally, ulvan lyase involved in ulvan degradation. Ulvan is the main polysaccharide component of the Ulvales (green seaweed) cell wall. It is composed of disaccharide building blocks comprising 3-sulfated rhamnose (Rha3S) linked to D-glucuronic acid (GlcA), L-iduronic acid (IduA), or D-xylose (Xyl). Ulvan lyase catalyzes the endolytic cleavage of the glycosidic bond between Rha3S and the uronic acids GlcA or IduA, producing oligosaccharides that have unsaturated 4-deoxy-L-threo-hex-4-enopyranosiduronic acid (deltaUA) at the non-reducing end. This results eventually in the degradation of the ulvan polysaccharide into deltaUA-Rha3S disaccharides and deltaUA-Rha3S-Xyl-Rha3S tetrasaccharides. This chain is Ulvan Lyase-PL25, found in Pseudoalteromonas sp. (strain PLSV).